The chain runs to 188 residues: UPF0301 protein MCA2336 2 (188 aa).

It belongs to the UPF0301 (AlgH) family.

The protein is UPF0301 protein MCA2336 2 of Methylococcus capsulatus (strain ATCC 33009 / NCIMB 11132 / Bath).